The chain runs to 105 residues: SAGA-associated factor 11 (105 aa).

Residues 76–97 (FRCPNCSRDLSANRFAAHLERC) form an SGF11-type zinc finger.

It belongs to the SGF11 family. Component of the 1.8 MDa SAGA transcription coactivator-HAT complex. SAGA is built of 5 distinct domains with specialized functions. Within the SAGA complex, SUS1, SGF11, SGF73 and UBP8 form an additional subcomplex of SAGA called the DUB module (deubiquitination module). Interacts directly with SGF73, SUS1 and UBP8.

It localises to the nucleus. In terms of biological role, functions as a component of the transcription regulatory histone acetylation (HAT) complex SAGA. At the promoters, SAGA is required for recruitment of the basal transcription machinery. It influences RNA polymerase II transcriptional activity through different activities such as TBP interaction and promoter selectivity, interaction with transcription activators, and chromatin modification through histone acetylation and deubiquitination. SAGA acetylates nucleosomal histone H3 to some extent (to form H3K9ac, H3K14ac, H3K18ac and H3K23ac). SAGA interacts with DNA via upstream activating sequences (UASs). Involved in transcriptional regulation of a subset of SAGA-regulated genes. Within the SAGA complex, participates in a subcomplex, that specifically deubiquitinates histones H2B. The polypeptide is SAGA-associated factor 11 (Eremothecium gossypii (strain ATCC 10895 / CBS 109.51 / FGSC 9923 / NRRL Y-1056) (Yeast)).